A 293-amino-acid polypeptide reads, in one-letter code: Undecaprenyl-diphosphatase (293 aa).

Helical transmembrane passes span 74 to 94 (VLVF…AGVF), 107 to 127 (WMII…KDLI), 134 to 154 (MWIT…AEKM), 209 to 229 (FLLA…DAFA), 243 to 263 (VGTL…MKFV), and 271 to 291 (FAAY…LGML).

Belongs to the UppP family.

The protein resides in the cell membrane. It catalyses the reaction di-trans,octa-cis-undecaprenyl diphosphate + H2O = di-trans,octa-cis-undecaprenyl phosphate + phosphate + H(+). Catalyzes the dephosphorylation of undecaprenyl diphosphate (UPP). Confers resistance to bacitracin. The polypeptide is Undecaprenyl-diphosphatase (Corynebacterium glutamicum (strain R)).